Consider the following 493-residue polypeptide: Alpha-amylase-related protein (493 aa).

The signal sequence occupies residues 1–19 (MFKFALTLTLCLAGSLSLA). At Gln20 the chain carries Pyrrolidone carboxylic acid. An intrachain disulfide couples Cys47 to Cys103. Positions 117, 168, and 177 each coordinate Ca(2+). An intrachain disulfide couples Cys156 to Cys170. Residue Arg205 participates in chloride binding. Residue Asp207 is the Nucleophile of the active site. His211 contacts Ca(2+). Glu244 acts as the Proton donor in catalysis. Chloride-binding residues include Asn307 and Arg342. 3 disulfides stabilise this stretch: Cys375/Cys381, Cys417/Cys440, and Cys447/Cys459.

Belongs to the glycosyl hydrolase 13 family. Monomer. Requires Ca(2+) as cofactor. Chloride serves as cofactor. As to expression, midgut and fat body.

It is found in the secreted. The enzyme catalyses Endohydrolysis of (1-&gt;4)-alpha-D-glucosidic linkages in polysaccharides containing three or more (1-&gt;4)-alpha-linked D-glucose units.. This is Alpha-amylase-related protein (Amyrel) from Drosophila melanogaster (Fruit fly).